The primary structure comprises 156 residues: Small ribosomal subunit protein uS7 (156 aa).

It belongs to the universal ribosomal protein uS7 family. Part of the 30S ribosomal subunit. Contacts proteins S9 and S11.

In terms of biological role, one of the primary rRNA binding proteins, it binds directly to 16S rRNA where it nucleates assembly of the head domain of the 30S subunit. Is located at the subunit interface close to the decoding center, probably blocks exit of the E-site tRNA. The chain is Small ribosomal subunit protein uS7 from Mycoplasmopsis synoviae (strain 53) (Mycoplasma synoviae).